The chain runs to 161 residues: MTTRVIYPGTFDPITNGHLDLIERAAAMFDHVVVGIAASPSKKPLFDLPERVALTQAITKHLPNVEIVGFSGLLVDFAKESNANILVRGLRAVSDFEYEFQLANMNRRLMPELETVFLTPSEENSFISSTIVKEVALHKGDVSQFVDLRITGALNAKLHTK.

Thr10 contributes to the substrate binding site. ATP-binding positions include 10–11 and His18; that span reads TF. Residues Lys42, Leu74, and Arg88 each contribute to the substrate site. Residues 89 to 91, Glu99, and 124 to 130 each bind ATP; these read GLR and NSFISST.

This sequence belongs to the bacterial CoaD family. In terms of assembly, homohexamer. Mg(2+) serves as cofactor.

It localises to the cytoplasm. The enzyme catalyses (R)-4'-phosphopantetheine + ATP + H(+) = 3'-dephospho-CoA + diphosphate. Its pathway is cofactor biosynthesis; coenzyme A biosynthesis; CoA from (R)-pantothenate: step 4/5. Reversibly transfers an adenylyl group from ATP to 4'-phosphopantetheine, yielding dephospho-CoA (dPCoA) and pyrophosphate. The protein is Phosphopantetheine adenylyltransferase of Photobacterium profundum (strain SS9).